Reading from the N-terminus, the 221-residue chain is Protein DEHYDRATION-INDUCED 19 homolog 2 (221 aa).

Disordered regions lie at residues Met-1–Lys-24 and Val-162–Asp-193.

It belongs to the Di19 family. Post-translationally, not phosphorylated in vitro by CPK3 or CPK11. Expressed in seedlings, roots, leaves, stems, flowers and siliques.

It is found in the cytoplasm. The protein resides in the nucleus. The chain is Protein DEHYDRATION-INDUCED 19 homolog 2 (DI19-2) from Arabidopsis thaliana (Mouse-ear cress).